The primary structure comprises 253 residues: 1-(5-phosphoribosyl)-5-[(5-phosphoribosylamino)methylideneamino] imidazole-4-carboxamide isomerase (253 aa).

D8 serves as the catalytic Proton acceptor. The active-site Proton donor is D131.

Belongs to the HisA/HisF family.

The protein resides in the cytoplasm. It catalyses the reaction 1-(5-phospho-beta-D-ribosyl)-5-[(5-phospho-beta-D-ribosylamino)methylideneamino]imidazole-4-carboxamide = 5-[(5-phospho-1-deoxy-D-ribulos-1-ylimino)methylamino]-1-(5-phospho-beta-D-ribosyl)imidazole-4-carboxamide. It participates in amino-acid biosynthesis; L-histidine biosynthesis; L-histidine from 5-phospho-alpha-D-ribose 1-diphosphate: step 4/9. The chain is 1-(5-phosphoribosyl)-5-[(5-phosphoribosylamino)methylideneamino] imidazole-4-carboxamide isomerase from Polynucleobacter asymbioticus (strain DSM 18221 / CIP 109841 / QLW-P1DMWA-1) (Polynucleobacter necessarius subsp. asymbioticus).